The primary structure comprises 493 residues: MLGLQRETSSMYKRTSSRDYSPMIDVEDSSGLLENDVDNEMETTNPSWKCSLPHVLVATISSFLFGYHLGVVNEPLESISSDLGFSGDTLAEGLVVSVCLGGAFLGSLFSGGVADGFGRRRAFQICALPMILGAFVSGVSNSLAVMLLGRFLVGTGMGLGPPVAALYVTEVSPAFVRGTYGSFIQIATCLGLMAALFIGIPVHNITGWWRVCFWLSTIPAALLALGMFLCAESPQWLFKQGKIAEAEAEFERLLGGSHVKTAMAELYKLDLDKTDEPDVVSLSELLYGRHSRVVFIGSTLFALQQLSGINAVFYFSSTVFKSAGVPSDLGNIFVGVSNLLGSVIAMVLMDKVGRKLLLLWSFIGMAAAMALQVGATSSYLPHFSALCLSVGGTLVFVLTFALGAGPVPGLLLPEIFPSRIRAKAMAFCMSVHWVINFFVGLLFLRLLEKLGPRLLYSMFSTFCLMAVMFVKRNVIETKGKTLQEIEISLLAKP.

Over residues 1–14 (MLGLQRETSSMYKR) the composition is skewed to polar residues. A disordered region spans residues 1 to 24 (MLGLQRETSSMYKRTSSRDYSPMI). 12 helical membrane passes run 52 to 72 (LPHV…LGVV), 94 to 114 (LVVS…GGVA), 128 to 148 (LPMI…VMLL), 151 to 171 (FLVG…VTEV), 182 to 202 (SFIQ…GIPV), 211 to 231 (VCFW…FLCA), 293 to 313 (VVFI…NAVF), 329 to 349 (LGNI…MVLM), 356 to 376 (LLLL…VGAT), 392 to 412 (GTLV…GLLL), 424 to 444 (AMAF…LLFL), and 450 to 470 (LGPR…VMFV).

This sequence belongs to the major facilitator superfamily. Sugar transporter (TC 2.A.1.1) family.

The protein localises to the plastid. Its subcellular location is the chloroplast membrane. May be involved in the efflux of glucose towards the cytosol. The sequence is that of Probable plastidic glucose transporter 2 from Arabidopsis thaliana (Mouse-ear cress).